The primary structure comprises 407 residues: Digeranylgeranylglycerophospholipid reductase (407 aa).

Positions 15, 34, 45, 46, 48, 99, 123, 281, 293, and 294 each coordinate FAD.

The protein belongs to the geranylgeranyl reductase family. DGGGPL reductase subfamily. FAD serves as cofactor.

The enzyme catalyses a 2,3-bis-O-phytanyl-sn-glycerol 1-phospholipid + 8 oxidized 2[4Fe-4S]-[ferredoxin] = a 2,3-bis-O-(geranylgeranyl)-sn-glycerol 1-phospholipid + 8 reduced 2[4Fe-4S]-[ferredoxin] + 16 H(+). The catalysed reaction is 2,3-bis-O-(phytanyl)-sn-glycerol 1-phosphate + 8 oxidized 2[4Fe-4S]-[ferredoxin] = 2,3-bis-O-(geranylgeranyl)-sn-glycerol 1-phosphate + 8 reduced 2[4Fe-4S]-[ferredoxin] + 16 H(+). It carries out the reaction a 2,3-bis-O-phytanyl-sn-glycerol 1-phospholipid + 8 A = a 2,3-bis-O-(geranylgeranyl)-sn-glycerol 1-phospholipid + 8 AH2. It catalyses the reaction CDP-2,3-bis-O-(geranylgeranyl)-sn-glycerol + 8 AH2 = CDP-2,3-bis-O-(phytanyl)-sn-glycerol + 8 A. The enzyme catalyses archaetidylserine + 8 AH2 = 2,3-bis-O-phytanyl-sn-glycero-3-phospho-L-serine + 8 A. It participates in membrane lipid metabolism; glycerophospholipid metabolism. Its function is as follows. Is involved in the reduction of 2,3-digeranylgeranylglycerophospholipids (unsaturated archaeols) into 2,3-diphytanylglycerophospholipids (saturated archaeols) in the biosynthesis of archaeal membrane lipids. Catalyzes the formation of archaetidic acid (2,3-di-O-phytanyl-sn-glyceryl phosphate) from 2,3-di-O-geranylgeranylglyceryl phosphate (DGGGP) via the hydrogenation of each double bond of the isoprenoid chains. Requires the adjacently encoded ferredoxin MA_1485 as the electron donor. Is also probably able to reduce double bonds of geranyl groups in CDP-2,3-bis-O-(geranylgeranyl)-sn-glycerol and archaetidylserine, thus acting at various stages in the biosynthesis of archaeal membrane lipids. The polypeptide is Digeranylgeranylglycerophospholipid reductase (Methanosarcina acetivorans (strain ATCC 35395 / DSM 2834 / JCM 12185 / C2A)).